A 150-amino-acid chain; its full sequence is Ankyrin repeat protein C18/B24 (150 aa).

The ANK repeat unit spans residues 41 to 73; sequence ENKTLLYYAVDVNNIQFAKRLLEYGASVTTSRS.

This chain is Ankyrin repeat protein C18/B24, found in Vaccinia virus (strain Copenhagen) (VACV).